The sequence spans 145 residues: Large ribosomal subunit protein uL13 (145 aa).

This sequence belongs to the universal ribosomal protein uL13 family. In terms of assembly, part of the 50S ribosomal subunit.

This protein is one of the early assembly proteins of the 50S ribosomal subunit, although it is not seen to bind rRNA by itself. It is important during the early stages of 50S assembly. The polypeptide is Large ribosomal subunit protein uL13 (Staphylococcus saprophyticus subsp. saprophyticus (strain ATCC 15305 / DSM 20229 / NCIMB 8711 / NCTC 7292 / S-41)).